The chain runs to 634 residues: TATA box-binding protein-associated factor RNA polymerase I subunit B (634 aa).

An RRN7-type zinc finger spans residues 19-51 (LVCEYCGHGSEYAEDDADDGFFTCRQCSAIHTS). Cysteine 21, cysteine 24, cysteine 42, and cysteine 45 together coordinate Zn(2+). A B-reader region spans residues 51-80 (STQNTATNPFDFPMTPAHLSAHRRPTQPTP). The segment at 54-107 (NTATNPFDFPMTPAHLSAHRRPTQPTPTPKPFPAPRGAATGAAAPDFDDLGEPS) is disordered. Over residues 77 to 87 (QPTPTPKPFPA) the composition is skewed to pro residues. A B-linker region spans residues 81-83 (TPK). Residues 84-281 (PFPAPRGAAT…DKLLGSSLND (198 aa)) are N-terminal cyclin fold. The segment covering 88–98 (PRGAATGAAAP) has biased composition (low complexity). The segment at 282 to 284 (CPL) is C-terminal cyclin fold.

It belongs to the RRN7/TAF1B family.

The protein resides in the nucleus. The protein localises to the nucleolus. Component of RNA polymerase I core factor complex that acts as a GTF2B/TFIIB-like factor and plays a key role in multiple steps during transcription initiation such as pre-initiation complex (PIC) assembly and postpolymerase recruitment events in polymerase I (Pol I) transcription. Binds rDNA promoters and plays a role in Pol I recruitment. The protein is TATA box-binding protein-associated factor RNA polymerase I subunit B of Oryza sativa subsp. japonica (Rice).